The following is a 121-amino-acid chain: Large ribosomal subunit protein bL17 (121 aa).

Belongs to the bacterial ribosomal protein bL17 family. As to quaternary structure, part of the 50S ribosomal subunit. Contacts protein L32.

The sequence is that of Large ribosomal subunit protein bL17 from Rubrobacter xylanophilus (strain DSM 9941 / JCM 11954 / NBRC 16129 / PRD-1).